The sequence spans 203 residues: N-(5'-phosphoribosyl)anthranilate isomerase (203 aa).

This sequence belongs to the TrpF family.

It catalyses the reaction N-(5-phospho-beta-D-ribosyl)anthranilate = 1-(2-carboxyphenylamino)-1-deoxy-D-ribulose 5-phosphate. It participates in amino-acid biosynthesis; L-tryptophan biosynthesis; L-tryptophan from chorismate: step 3/5. This Caldanaerobacter subterraneus subsp. tengcongensis (strain DSM 15242 / JCM 11007 / NBRC 100824 / MB4) (Thermoanaerobacter tengcongensis) protein is N-(5'-phosphoribosyl)anthranilate isomerase.